The sequence spans 27 residues: Conotoxin Lo6/7b (27 aa).

3 disulfide bridges follow: cysteine 2–cysteine 16, cysteine 9–cysteine 19, and cysteine 15–cysteine 26. Tyrosine 27 carries the post-translational modification Tyrosine amide.

In terms of tissue distribution, expressed by the venom duct.

The protein localises to the secreted. In terms of biological role, 1 uM of this toxin does not show any effect on voltage-gated sodium and potassium channels. Does not show antibacterial activity on both Gram-negative and Gram-positive bacteria. In Conasprella longurionis (Cone snail), this protein is Conotoxin Lo6/7b.